Reading from the N-terminus, the 540-residue chain is NADH-ubiquinone oxidoreductase chain 4 (540 aa).

Helical transmembrane passes span T2–L22, I35–C55, I89–I109, Q118–T138, L140–V160, F172–L192, L218–L238, P248–I268, Y282–L302, I310–V330, I338–I358, V376–I396, I415–L435, and V501–M521.

The protein belongs to the complex I subunit 4 family.

Its subcellular location is the mitochondrion membrane. It catalyses the reaction a ubiquinone + NADH + 5 H(+)(in) = a ubiquinol + NAD(+) + 4 H(+)(out). In terms of biological role, core subunit of the mitochondrial membrane respiratory chain NADH dehydrogenase (Complex I) that is believed to belong to the minimal assembly required for catalysis. Complex I functions in the transfer of electrons from NADH to the respiratory chain. The immediate electron acceptor for the enzyme is believed to be ubiquinone. In Dictyostelium discoideum (Social amoeba), this protein is NADH-ubiquinone oxidoreductase chain 4 (nad4).